The following is a 442-amino-acid chain: ATP-dependent protease ATPase subunit HslU (442 aa).

ATP-binding positions include Ile-18, 60–65 (GVGKTE), Asp-255, Glu-320, and Arg-392.

It belongs to the ClpX chaperone family. HslU subfamily. As to quaternary structure, a double ring-shaped homohexamer of HslV is capped on each side by a ring-shaped HslU homohexamer. The assembly of the HslU/HslV complex is dependent on binding of ATP.

Its subcellular location is the cytoplasm. Functionally, ATPase subunit of a proteasome-like degradation complex; this subunit has chaperone activity. The binding of ATP and its subsequent hydrolysis by HslU are essential for unfolding of protein substrates subsequently hydrolyzed by HslV. HslU recognizes the N-terminal part of its protein substrates and unfolds these before they are guided to HslV for hydrolysis. The sequence is that of ATP-dependent protease ATPase subunit HslU from Shewanella putrefaciens (strain CN-32 / ATCC BAA-453).